Reading from the N-terminus, the 418-residue chain is Serine proteinase inhibitor 2.4 (418 aa).

The signal sequence occupies residues 1 to 28 (MAFIAALGIFMAGICPAVLCFPNGTLGR). 4 N-linked (GlcNAc...) asparagine glycosylation sites follow: Asn23, Asn38, Asn104, and Asn269.

The protein belongs to the serpin family.

It is found in the secreted. The sequence is that of Serine proteinase inhibitor 2.4 from Apodemus sylvaticus (European woodmouse).